The sequence spans 255 residues: F-box/SPRY domain-containing protein 1 (255 aa).

Residues Asp3–His51 enclose the F-box domain. Residues Leu61–Leu253 form the B30.2/SPRY domain.

The protein belongs to the FBXO45/Fsn family. As to quaternary structure, component of an E3 ubiquitin ligase complex composed of hiw and Fsn.

Its subcellular location is the synapse. The protein operates within protein modification; protein ubiquitination. Required in the presynaptic motoneuron to down-regulate the levels of wnd and restrain synaptic terminal growth at the neuromuscular junction (NMJ). This Drosophila simulans (Fruit fly) protein is F-box/SPRY domain-containing protein 1.